The sequence spans 389 residues: MRYITSGESHGKQLTTIIEGLPSQLPITAEDINASLRRRQGGHGRGKRMQIEKDTVDIVSGVRHGYTLGSPLSLVIRNDDFKHWTDIMGEEPMEDPSKMRRVVTKPRPGHADLNGALKYGHRDMRNVLERSSARETAARVAAGAVAKKLLKELGIEVSGYVKEIAGIEASDLPELNAQERADKANQSPVMVLDATVEEQMTNAIDQAKKEGDSIGGVCEVYVEGMPAGVGSYVHYDRKLDSRLAGSVVSINAFKGVEFGIGFEAAKRNGSEVHDEIAWDETHGYYRTTNRLGGFEGGMTTGMPIIVRGVMKPIPTLMKRPLTSVDIETKEPFKATVERSDACAVPAASVVMEHVVAFELAKALTEQFSSDQLPQLKKAIDDYREEIRCF.

Arginine 39 and arginine 45 together coordinate NADP(+). Residues 130-132 (RSS), 251-252 (NA), glycine 296, 311-315 (KPIPT), and arginine 338 each bind FMN.

The protein belongs to the chorismate synthase family. As to quaternary structure, homotetramer. FMNH2 is required as a cofactor.

The catalysed reaction is 5-O-(1-carboxyvinyl)-3-phosphoshikimate = chorismate + phosphate. The protein operates within metabolic intermediate biosynthesis; chorismate biosynthesis; chorismate from D-erythrose 4-phosphate and phosphoenolpyruvate: step 7/7. Functionally, catalyzes the anti-1,4-elimination of the C-3 phosphate and the C-6 proR hydrogen from 5-enolpyruvylshikimate-3-phosphate (EPSP) to yield chorismate, which is the branch point compound that serves as the starting substrate for the three terminal pathways of aromatic amino acid biosynthesis. This reaction introduces a second double bond into the aromatic ring system. This is Chorismate synthase from Oceanobacillus iheyensis (strain DSM 14371 / CIP 107618 / JCM 11309 / KCTC 3954 / HTE831).